Here is a 187-residue protein sequence, read N- to C-terminus: UPF0301 protein VV2869 (187 aa).

It belongs to the UPF0301 (AlgH) family.

In Vibrio vulnificus (strain YJ016), this protein is UPF0301 protein VV2869.